The following is a 185-amino-acid chain: Ribosome-recycling factor (185 aa).

This sequence belongs to the RRF family.

The protein resides in the cytoplasm. In terms of biological role, responsible for the release of ribosomes from messenger RNA at the termination of protein biosynthesis. May increase the efficiency of translation by recycling ribosomes from one round of translation to another. The chain is Ribosome-recycling factor from Buchnera aphidicola subsp. Schizaphis graminum (strain Sg).